A 179-amino-acid chain; its full sequence is Adenine phosphoribosyltransferase (179 aa).

Belongs to the purine/pyrimidine phosphoribosyltransferase family. Homodimer.

It localises to the cytoplasm. The catalysed reaction is AMP + diphosphate = 5-phospho-alpha-D-ribose 1-diphosphate + adenine. It participates in purine metabolism; AMP biosynthesis via salvage pathway; AMP from adenine: step 1/1. Its function is as follows. Catalyzes a salvage reaction resulting in the formation of AMP, that is energically less costly than de novo synthesis. This Beijerinckia indica subsp. indica (strain ATCC 9039 / DSM 1715 / NCIMB 8712) protein is Adenine phosphoribosyltransferase.